The following is a 216-amino-acid chain: Cyclo(L-leucyl-L-leucyl) synthase (216 aa).

Residue serine 14 is the Nucleophile of the active site. Substrate is bound by residues asparagine 17, 155–159 (YIFDE), and tyrosine 179.

This sequence belongs to the CDPS family.

It catalyses the reaction 2 L-leucyl-tRNA(Leu) = cyclo(L-leucyl-L-leucyl) + 2 tRNA(Leu) + 2 H(+). Its function is as follows. It uses activated amino acids in the form of aminoacyl-tRNAs (aa-tRNAs) as substrates to catalyze the ATP-independent formation of cyclodipeptides which are intermediates in diketopiperazine (DKP) biosynthetic pathways. Catalyzes the formation of cyclo(L-Leu-L-Leu) (cLL) from L-leucyl-tRNA(Leu). Can incorporate various nonpolar residues, such as L-leucine and L-methionine, into cyclodipeptides. The protein is Cyclo(L-leucyl-L-leucyl) synthase of Corynebacterium jeikeium (strain K411).